A 568-amino-acid chain; its full sequence is Clathrin coat assembly protein AP180B (568 aa).

The ENTH domain occupies 1–127 (MSSLYTKLVK…EEYGRLGMDH (127 aa)). Positions 262-283 (HLREETKRQRGEPSEPQQDRKP) are enriched in basic and acidic residues. Residues 262 to 302 (HLREETKRQRGEPSEPQQDRKPSTAISSTSSHNNNSNDKNK) form a disordered region. A Glycyl lysine isopeptide (Lys-Gly) (interchain with G-Cter in ubiquitin) cross-link involves residue Lys282. Residues 284-298 (STAISSTSSHNNNSN) are compositionally biased toward low complexity. Thr449 carries the post-translational modification Phosphothreonine.

The protein belongs to the AP180 family. Interacts with PAN1 and the clathrin heavy and light chains CHC1 and CLC1.

The protein resides in the bud. Its subcellular location is the bud neck. It localises to the cell membrane. The protein localises to the cytoplasm. Functionally, involved in endocytosis and clathrin cage assembly. In Saccharomyces cerevisiae (strain ATCC 204508 / S288c) (Baker's yeast), this protein is Clathrin coat assembly protein AP180B (YAP1802).